We begin with the raw amino-acid sequence, 465 residues long: Probable dipeptidase A (465 aa).

C3 is a catalytic residue.

Belongs to the peptidase C69 family.

It catalyses the reaction an L-aminoacyl-L-amino acid + H2O = 2 an L-alpha-amino acid. In Streptococcus pyogenes serotype M3 (strain SSI-1), this protein is Probable dipeptidase A (pepDA).